Reading from the N-terminus, the 362-residue chain is MNDQKMSCWRKKSKKKNSEANQRQRWFQENGKVLLEDLIELCNGKSNPIKTFSAEEILQATDNFSESNLVIRFNFMYRGILQNRPVLIKRATWNYYKSDTLEKICRDIAVSSMVSGHKNFLKLLGCCLEFEHPVLVCEYAERIPFNTPNPEMLLPWRMRIKIAKEIAIAVSYLHTALSRTMIHTDIQPFNIFVDSNGTAKLSDFCLCIAIPEGETFVKVHADRVEGTLDYLEYNYAATGLITEYTDVFSFGVLLQNFFTRTYGVVDCCCSEDESLFEEFEDKQNVMNLRISDRISKFVEEGRIFDMLDPKMLESMGDDETEEHKIRRMKAVLMLSLRCTGHRGDVPKMMEVAKELKRIERWT.

The tract at residues Met-1–Arg-23 is disordered. The region spanning Leu-35 to Thr-362 is the Protein kinase domain. ATP-binding positions include Leu-41–Ile-49 and Lys-89. Asp-185 acts as the Proton acceptor in catalysis.

This sequence belongs to the protein kinase superfamily. Ser/Thr protein kinase family. ZRK subfamily.

It carries out the reaction L-seryl-[protein] + ATP = O-phospho-L-seryl-[protein] + ADP + H(+). The catalysed reaction is L-threonyl-[protein] + ATP = O-phospho-L-threonyl-[protein] + ADP + H(+). The polypeptide is Serine/threonine-protein kinase ZRK4 (Arabidopsis thaliana (Mouse-ear cress)).